Here is a 521-residue protein sequence, read N- to C-terminus: Medium/long-chain-fatty-acid--[acyl-carrier-protein] ligase MbtM (521 aa).

The protein belongs to the ATP-dependent AMP-binding enzyme family.

The enzyme catalyses a long-chain fatty acid + holo-[ACP] + ATP = a long-chain fatty acyl-[ACP] + AMP + diphosphate. It carries out the reaction a medium-chain fatty acid + holo-[ACP] + ATP = a medium-chain fatty acyl-[ACP] + AMP + diphosphate. It participates in siderophore biosynthesis; mycobactin biosynthesis. Activates lipidic moieties required for mycobactin biosynthesis. Converts medium- to long-chain aliphatic fatty acids into acyl adenylate, which is further transferred on to the phosphopantetheine arm of the carrier protein MbtL. This chain is Medium/long-chain-fatty-acid--[acyl-carrier-protein] ligase MbtM (mbtM), found in Mycobacterium sp. (strain MCS).